We begin with the raw amino-acid sequence, 2640 residues long: Collagen alpha-5(VI) chain (2640 aa).

The first 18 residues, 1–18 (MKLRLIAFVLILWTETLA), serve as a signal peptide directing secretion. Residues 19 to 1426 (DQSPGPGPEY…ACCCTFCKCP (1408 aa)) are nonhelical region. 7 VWFA domains span residues 30-209 (DVVF…IKDV), 268-445 (DLIF…LKKI), 474-644 (DIYF…KNEI), 660-829 (DIMF…ESKL), 846-1023 (DIVF…QETL), 1037-1214 (DVIF…VREI), and 1226-1413 (DVVV…LGNI). N-linked (GlcNAc...) asparagine glycans are attached at residues N201, N292, and N614. Collagen-like domains are found at residues 1426–1478 (PGIP…GCPG), 1474–1524 (VGCP…DPGN), 1557–1614 (GQKG…GPEG), 1632–1689 (GSQG…GIPG), and 1706–1762 (GDPG…AGQP). Positions 1427 to 1760 (GIPGPHGTRG…GRRGPKGTAG (334 aa)) are triple-helical region. Residues 1435–1761 (RGLQASKGSS…RRGPKGTAGQ (327 aa)) form a disordered region. A compositionally biased stretch (basic and acidic residues) spans 1452–1464 (HRGEDGDPGRRGE). Basic and acidic residues predominate over residues 1537 to 1567 (DGEKGFPGDPGDPGKDSNIKGQKGEKGERGR). Residues 1597–1609 (PSGQAGNPGPQGT) are compositionally biased toward polar residues. Residues 1610-1622 (QGPEGLQGSQGSS) show a composition bias toward low complexity. The short motif at 1649-1651 (RGD) is the Cell attachment site element. Over residues 1718-1727 (GIPGGPGPKG) the composition is skewed to gly residues. The segment covering 1740-1750 (RSGLQGSQGPP) has biased composition (low complexity). Positions 1761 to 2640 (QPIYSPCELI…NSKQDGEDAR (880 aa)) are nonhelical region. 2 VWFA domains span residues 1790–1970 (ELVF…KLRR) and 1996–2186 (DVAF…VKFL). 2 consecutive short sequence motifs (cell attachment site) follow at residues 2216–2218 (RGD) and 2259–2261 (RGD). A VWFA 10 domain is found at 2321–2516 (DVAFLIDASQ…PDLDYVIKFI (196 aa)). N-linked (GlcNAc...) asparagine glycosylation is present at N2541. The tract at residues 2617–2640 (DKEEPCSAETPAPVNSKQDGEDAR) is disordered.

The protein belongs to the type VI collagen family. Trimers composed of three different chains: alpha-1(VI), alpha-2(VI), and alpha-3(VI) or alpha-4(VI) or alpha-5(VI) or alpha-6(VI). In terms of processing, prolines at the third position of the tripeptide repeating unit (G-X-Y) are hydroxylated in some or all of the chains. As to expression, in newborn, it is expressed in lung, heart, kidney, muscle, brain, intestine, skin, femur, sternum and calvaria. In adult, it is widely expressed and is detected in lung, heart, kidney, spleen, muscle, ovary, uterus, brain, skin, liver and sternum.

Its subcellular location is the secreted. It localises to the extracellular space. The protein localises to the extracellular matrix. Collagen VI acts as a cell-binding protein. This is Collagen alpha-5(VI) chain (Col6a5) from Mus musculus (Mouse).